Reading from the N-terminus, the 117-residue chain is Immunoglobulin kappa variable 1-17 (117 aa).

Positions 1–22 (MDMRVPAQLLGLLLLWFPGARC) are cleaved as a signal peptide. Residues 23–45 (DIQMTQSPSSLSASVGDRVTITC) form a framework-1 region. In terms of domain architecture, Ig-like spans 24–117 (IQMTQSPSSL…YYCLQHNSYP (94 aa)). Cysteines 45 and 110 form a disulfide. Residues 46-56 (RASQGIRNDLG) are complementarity-determining-1. The segment at 57–71 (WYQQKPGKAPKRLIY) is framework-2. The interval 72-78 (AASSLQS) is complementarity-determining-2. Positions 79-110 (GVPSRFSGSGSGTEFTLTISSLQPEDFATYYC) are framework-3. Positions 111–117 (LQHNSYP) are complementarity-determining-3.

As to quaternary structure, immunoglobulins are composed of two identical heavy chains and two identical light chains; disulfide-linked.

The protein resides in the secreted. It is found in the cell membrane. Functionally, v region of the variable domain of immunoglobulin light chains that participates in the antigen recognition. Immunoglobulins, also known as antibodies, are membrane-bound or secreted glycoproteins produced by B lymphocytes. In the recognition phase of humoral immunity, the membrane-bound immunoglobulins serve as receptors which, upon binding of a specific antigen, trigger the clonal expansion and differentiation of B lymphocytes into immunoglobulins-secreting plasma cells. Secreted immunoglobulins mediate the effector phase of humoral immunity, which results in the elimination of bound antigens. The antigen binding site is formed by the variable domain of one heavy chain, together with that of its associated light chain. Thus, each immunoglobulin has two antigen binding sites with remarkable affinity for a particular antigen. The variable domains are assembled by a process called V-(D)-J rearrangement and can then be subjected to somatic hypermutations which, after exposure to antigen and selection, allow affinity maturation for a particular antigen. The protein is Immunoglobulin kappa variable 1-17 of Homo sapiens (Human).